Reading from the N-terminus, the 352-residue chain is Chorismate synthase (352 aa).

Residues Arg-48 and Arg-54 each coordinate NADP(+). FMN-binding positions include 125 to 127 (RSS), 238 to 239 (NA), Gly-278, 293 to 297 (KPTSS), and Arg-319.

It belongs to the chorismate synthase family. In terms of assembly, homotetramer. FMNH2 is required as a cofactor.

It catalyses the reaction 5-O-(1-carboxyvinyl)-3-phosphoshikimate = chorismate + phosphate. It functions in the pathway metabolic intermediate biosynthesis; chorismate biosynthesis; chorismate from D-erythrose 4-phosphate and phosphoenolpyruvate: step 7/7. Its function is as follows. Catalyzes the anti-1,4-elimination of the C-3 phosphate and the C-6 proR hydrogen from 5-enolpyruvylshikimate-3-phosphate (EPSP) to yield chorismate, which is the branch point compound that serves as the starting substrate for the three terminal pathways of aromatic amino acid biosynthesis. This reaction introduces a second double bond into the aromatic ring system. This chain is Chorismate synthase, found in Bordetella petrii (strain ATCC BAA-461 / DSM 12804 / CCUG 43448).